The sequence spans 296 residues: Nucleotide-binding protein SUB0630 (296 aa).

13–20 (GMSGAGKT) provides a ligand contact to ATP. 63–66 (DMRS) provides a ligand contact to GTP.

This sequence belongs to the RapZ-like family.

Its function is as follows. Displays ATPase and GTPase activities. This chain is Nucleotide-binding protein SUB0630, found in Streptococcus uberis (strain ATCC BAA-854 / 0140J).